Consider the following 148-residue polypeptide: uncharacterized protein (148 aa).

Residues 2 to 63 (LDELDKRILY…LINPFKAGYE (62 aa)) enclose the HTH asnC-type domain. Positions 21–40 (YSEIARILGVPESTVRVRVK) form a DNA-binding region, H-T-H motif.

This is an uncharacterized protein from Pyrococcus furiosus (strain ATCC 43587 / DSM 3638 / JCM 8422 / Vc1).